We begin with the raw amino-acid sequence, 413 residues long: Zinc finger protein 821 (413 aa).

Residues 26-83 (RQAMMKTDFPGDLGSQRQAIQQLRDQDSSSSDSEGDEEETTQDEVSSHTSEEDGGVVK) form a disordered region. Positions 58–67 (SEGDEEETTQ) are enriched in acidic residues. 2 consecutive C2H2-type zinc fingers follow at residues 117–141 (QLCQ…VYQH) and 151–173 (YMCP…LLIH). The stretch at 260-367 (ALRRQNEPLE…EKMDMMLRAQ (108 aa)) forms a coiled coil. The segment at 279–320 (RTAKKSRRDNETPEEREVRRMRDREAKRLQRMQETDEQRARR) is disordered.

The protein belongs to the krueppel C2H2-type zinc-finger protein family.

Its subcellular location is the nucleus. Its function is as follows. May be involved in transcriptional regulation. The polypeptide is Zinc finger protein 821 (Znf821) (Mus musculus (Mouse)).